The following is a 322-amino-acid chain: Zinc finger C2HC domain-containing protein zchc-1A (322 aa).

C2HC/C3H-type zinc fingers lie at residues 9-38 and 119-148; these read PTFP…LASL and DYVQ…QATR. Zn(2+) is bound by residues cysteine 13, cysteine 16, histidine 28, cysteine 32, cysteine 123, cysteine 126, histidine 138, and cysteine 142. Residues 150 to 159 show a composition bias toward polar residues; sequence QGGNLKSSGG. The segment at 150 to 322 is disordered; sequence QGGNLKSSGG…SRNNSRSRIF (173 aa). Positions 174–220 are enriched in basic and acidic residues; it reads NEGKKQESSSRNGSAERKPTTRGRDGSLLRARRDDSNDITSRRKSLD. Composition is skewed to polar residues over residues 221–238 and 264–274; these read TRTS…TSLS and LQQSSTPQQRL. The segment covering 276-295 has biased composition (low complexity); the sequence is TPASTTTTASRSGSRTSSRA. The span at 296 to 305 shows a compositional bias: basic and acidic residues; it reads CPRDDSRDSR. Over residues 311-322 the composition is skewed to low complexity; that stretch reads NNSRNNSRSRIF.

Belongs to the ZC2HC1 family. It depends on Zn(2+) as a cofactor.

The protein is Zinc finger C2HC domain-containing protein zchc-1A of Caenorhabditis elegans.